Consider the following 128-residue polypeptide: Cytochrome c-type biogenesis protein CcmE (128 aa).

Topologically, residues 1–8 (MQKIVRNR) are cytoplasmic. A helical; Signal-anchor for type II membrane protein transmembrane segment spans residues 9 to 29 (LIKIILCFCSTCLGISIILYN). Topologically, residues 30–128 (LEKNIIFFFP…KHDENYRPPS (99 aa)) are periplasmic. Residues histidine 120 and tyrosine 124 each coordinate heme.

Belongs to the CcmE/CycJ family.

The protein resides in the cell inner membrane. Its function is as follows. Heme chaperone required for the biogenesis of c-type cytochromes. Transiently binds heme delivered by CcmC and transfers the heme to apo-cytochromes in a process facilitated by CcmF and CcmH. The sequence is that of Cytochrome c-type biogenesis protein CcmE from Rickettsia typhi (strain ATCC VR-144 / Wilmington).